The following is a 308-amino-acid chain: B3 domain-containing protein REM23 (308 aa).

Positions 19-114 (FFKVLKRSDM…SFTVKIFNKD (96 aa)) form a DNA-binding region, TF-B3 1. The tract at residues 117-198 (EMMQPPQSRA…TERTQNSKRT (82 aa)) is disordered. Polar residues predominate over residues 121 to 133 (PPQSRASFASSSR). Residues 134-145 (VKTEQDVKREEE) show a composition bias toward basic and acidic residues. A compositionally biased stretch (polar residues) spans 149–166 (SSDSRSRGPTTAAETNRG). Over residues 168–177 (SYKRKLNFGK) the composition is skewed to basic residues. The span at 178–198 (KKAEETQTYKRTERTQNSKRT) shows a compositional bias: basic and acidic residues. The segment at residues 216-308 (VAGFKIFISK…LELLLVVSKP (93 aa)) is a DNA-binding region (TF-B3 2).

The protein localises to the nucleus. This is B3 domain-containing protein REM23 (REM23) from Arabidopsis thaliana (Mouse-ear cress).